Reading from the N-terminus, the 652-residue chain is Acetyl-coenzyme A synthetase (652 aa).

Residues 191–194, threonine 311, and asparagine 335 each bind CoA; that span reads RAGR. Residues 387-389, 411-416, aspartate 500, and arginine 515 contribute to the ATP site; these read GEP and DTWWQT. Serine 523 is a CoA binding site. ATP is bound at residue arginine 526. Mg(2+) is bound by residues valine 537, histidine 539, and isoleucine 542. A CoA-binding site is contributed by arginine 584. Lysine 609 is modified (N6-acetyllysine).

The protein belongs to the ATP-dependent AMP-binding enzyme family. Mg(2+) serves as cofactor. In terms of processing, acetylated. Deacetylation by the SIR2-homolog deacetylase activates the enzyme.

The catalysed reaction is acetate + ATP + CoA = acetyl-CoA + AMP + diphosphate. In terms of biological role, catalyzes the conversion of acetate into acetyl-CoA (AcCoA), an essential intermediate at the junction of anabolic and catabolic pathways. Acs undergoes a two-step reaction. In the first half reaction, Acs combines acetate with ATP to form acetyl-adenylate (AcAMP) intermediate. In the second half reaction, it can then transfer the acetyl group from AcAMP to the sulfhydryl group of CoA, forming the product AcCoA. Enables the cell to use acetate during aerobic growth to generate energy via the TCA cycle, and biosynthetic compounds via the glyoxylate shunt. Acetylates CheY, the response regulator involved in flagellar movement and chemotaxis. This chain is Acetyl-coenzyme A synthetase, found in Salmonella typhi.